The primary structure comprises 1228 residues: ABC transporter B family member 16 (1228 aa).

Helical transmembrane passes span Met22 to Ile42, Leu69 to Trp89, Leu145 to Trp167, Ile171 to Gly193, Gly251 to Gly271, and Gly283 to Leu303. Positions Met22–Glu311 constitute an ABC transmembrane type-1 1 domain. Positions Val346–Leu582 constitute an ABC transporter 1 domain. Gly381–Ser388 is a binding site for ATP. N-linked (GlcNAc...) asparagine glycans are attached at residues Asn529, Asn593, and Asn628. Residues Ala658–Lys946 enclose the ABC transmembrane type-1 2 domain. Transmembrane regions (helical) follow at residues Leu667–Phe687 and Ile700–Gln720. Asn755 carries N-linked (GlcNAc...) asparagine glycosylation. 2 helical membrane-spanning segments follow: residues Leu781–Trp801 and Ile805–Leu825. N-linked (GlcNAc...) asparagine glycosylation is present at Asn827. 2 helical membrane passes run Ser881 to Leu901 and Phe920 to Met940. In terms of domain architecture, ABC transporter 2 spans Ile981–Val1219. Asn1001 is a glycosylation site (N-linked (GlcNAc...) asparagine). Position 1016 to 1023 (Gly1016 to Ser1023) interacts with ATP.

Belongs to the ABC transporter superfamily. ABCB family. Multidrug resistance exporter (TC 3.A.1.201) subfamily.

The protein localises to the membrane. This Arabidopsis thaliana (Mouse-ear cress) protein is ABC transporter B family member 16 (ABCB16).